We begin with the raw amino-acid sequence, 122 residues long: Large ribosomal subunit protein bL12 (122 aa).

This sequence belongs to the bacterial ribosomal protein bL12 family. In terms of assembly, homodimer. Part of the ribosomal stalk of the 50S ribosomal subunit. Forms a multimeric L10(L12)X complex, where L10 forms an elongated spine to which 2 to 4 L12 dimers bind in a sequential fashion. Binds GTP-bound translation factors.

In terms of biological role, forms part of the ribosomal stalk which helps the ribosome interact with GTP-bound translation factors. Is thus essential for accurate translation. In Stenotrophomonas maltophilia (strain K279a), this protein is Large ribosomal subunit protein bL12.